Reading from the N-terminus, the 244-residue chain is Cyclin-Q (244 aa).

Belongs to the cyclin family. Cyclin-like FAM58 subfamily.

Functionally, may be an activating cyclin for the cyclin-associated kinase CDK10. This Xenopus laevis (African clawed frog) protein is Cyclin-Q (ccnq).